The following is a 120-amino-acid chain: Large ribosomal subunit protein bL12 (120 aa).

The protein belongs to the bacterial ribosomal protein bL12 family. In terms of assembly, homodimer. Part of the ribosomal stalk of the 50S ribosomal subunit. Forms a multimeric L10(L12)X complex, where L10 forms an elongated spine to which 2 to 4 L12 dimers bind in a sequential fashion. Binds GTP-bound translation factors.

In terms of biological role, forms part of the ribosomal stalk which helps the ribosome interact with GTP-bound translation factors. Is thus essential for accurate translation. The sequence is that of Large ribosomal subunit protein bL12 from Listeria monocytogenes serotype 4b (strain CLIP80459).